The primary structure comprises 1369 residues: Xanthine dehydrogenase (1369 aa).

One can recognise a 2Fe-2S ferredoxin-type domain in the interval 20 to 106; that stretch reads GEAVVYVNGV…GMHIITVEGI (87 aa). Cys58, Cys63, Cys66, Cys88, Cys128, Cys131, Cys164, and Cys166 together coordinate [2Fe-2S] cluster. Residues 265-450 form the FAD-binding PCMH-type domain; the sequence is NGFNGIRWYR…LSVILPWTRP (186 aa). FAD is bound by residues 293-300, Phe373, 383-387, Asp396, Leu440, and Lys458; these read LIIGNSEV and SVGGN. Positions 804 and 835 each coordinate Mo-molybdopterin. 2 residues coordinate substrate: Glu839 and Arg917. Residue Arg949 coordinates Mo-molybdopterin. Residues Phe951 and Thr1047 each contribute to the substrate site. Position 1116 (Ala1116) interacts with Mo-molybdopterin. The active-site Proton acceptor is Glu1305.

It belongs to the xanthine dehydrogenase family. In terms of assembly, homodimer. [2Fe-2S] cluster is required as a cofactor. FAD serves as cofactor. It depends on Mo-molybdopterin as a cofactor.

The enzyme catalyses xanthine + NAD(+) + H2O = urate + NADH + H(+). It carries out the reaction hypoxanthine + NAD(+) + H2O = xanthine + NADH + H(+). Functionally, key enzyme involved in purine catabolism. Catalyzes the oxidation of hypoxanthine to xanthine and the oxidation of xanthine to urate. In Oryza sativa subsp. japonica (Rice), this protein is Xanthine dehydrogenase (XDH).